The following is a 386-amino-acid chain: uncharacterized protein (386 aa).

The next 2 membrane-spanning stretches (helical) occupy residues 54 to 74 (AVLQ…AIVA) and 347 to 367 (LLGG…PIAG).

To M.tuberculosis Rv0628c.

Its subcellular location is the cell membrane. This is an uncharacterized protein from Mycobacterium tuberculosis (strain CDC 1551 / Oshkosh).